We begin with the raw amino-acid sequence, 37 residues long: Large ribosomal subunit protein bL36 (37 aa).

This sequence belongs to the bacterial ribosomal protein bL36 family.

The polypeptide is Large ribosomal subunit protein bL36 (Heliobacterium modesticaldum (strain ATCC 51547 / Ice1)).